The sequence spans 721 residues: Polyribonucleotide nucleotidyltransferase (721 aa).

Mg(2+) contacts are provided by aspartate 490 and aspartate 496. The region spanning 557-618 (PRILTLKINP…EAVRQKIEGL (62 aa)) is the KH domain. One can recognise an S1 motif domain in the interval 625–693 (GEEYEGTVVK…DRGKIDLIRP (69 aa)). The tract at residues 696 to 721 (EGKIAPREPRAARAGGDRGGRPPRRE) is disordered.

The protein belongs to the polyribonucleotide nucleotidyltransferase family. Requires Mg(2+) as cofactor.

The protein resides in the cytoplasm. It catalyses the reaction RNA(n+1) + phosphate = RNA(n) + a ribonucleoside 5'-diphosphate. In terms of biological role, involved in mRNA degradation. Catalyzes the phosphorolysis of single-stranded polyribonucleotides processively in the 3'- to 5'-direction. This chain is Polyribonucleotide nucleotidyltransferase, found in Deinococcus geothermalis (strain DSM 11300 / CIP 105573 / AG-3a).